A 407-amino-acid chain; its full sequence is 3-oxoacyl-[acyl-carrier-protein] synthase 1 (407 aa).

The 406-residue stretch at 1–406 (MKRVVITGFG…GTNVSLILKK (406 aa)) folds into the Ketosynthase family 3 (KS3) domain. Catalysis depends on for beta-ketoacyl synthase activity residues C164, H300, and H336.

The protein belongs to the thiolase-like superfamily. Beta-ketoacyl-ACP synthases family. Homodimer.

Its subcellular location is the cytoplasm. The catalysed reaction is a fatty acyl-[ACP] + malonyl-[ACP] + H(+) = a 3-oxoacyl-[ACP] + holo-[ACP] + CO2. It carries out the reaction (3Z)-decenoyl-[ACP] + malonyl-[ACP] + H(+) = 3-oxo-(5Z)-dodecenoyl-[ACP] + holo-[ACP] + CO2. Its pathway is lipid metabolism; fatty acid biosynthesis. Involved in the type II fatty acid elongation cycle. Catalyzes the elongation of a wide range of acyl-ACP by the addition of two carbons from malonyl-ACP to an acyl acceptor. Can also use unsaturated fatty acids. Catalyzes a key reaction in unsaturated fatty acid (UFA) synthesis, the elongation of the cis-3-decenoyl-ACP produced by FabA. The sequence is that of 3-oxoacyl-[acyl-carrier-protein] synthase 1 (fabB) from Buchnera aphidicola subsp. Schizaphis graminum (strain Sg).